We begin with the raw amino-acid sequence, 530 residues long: Trigger factor (530 aa).

One can recognise a PPIase FKBP-type domain in the interval Asp-162 to Pro-243. The interval Asn-432–Lys-530 is disordered. Composition is skewed to basic and acidic residues over residues Ser-459 to Pro-478 and Lys-501 to Ala-512.

This sequence belongs to the FKBP-type PPIase family. Tig subfamily.

The protein localises to the cytoplasm. The enzyme catalyses [protein]-peptidylproline (omega=180) = [protein]-peptidylproline (omega=0). In terms of biological role, involved in protein export. Acts as a chaperone by maintaining the newly synthesized protein in an open conformation. Functions as a peptidyl-prolyl cis-trans isomerase. The protein is Trigger factor of Cutibacterium acnes (strain DSM 16379 / KPA171202) (Propionibacterium acnes).